The sequence spans 37 residues: Calcitonin gene-related peptide 1 (37 aa).

An intrachain disulfide couples Cys-2 to Cys-7. Phe-37 is modified (phenylalanine amide).

This sequence belongs to the calcitonin family.

The protein resides in the secreted. Its function is as follows. CGRP1/CALCA is a peptide hormone that induces vasodilation mediated by the CALCRL-RAMP1 receptor complex. Dilates a variety of vessels including the coronary, cerebral and systemic vasculature. Its abundance in the CNS also points toward a neurotransmitter or neuromodulator role. It also elevates platelet cAMP. CGRP1 can also bind and activate CALCR-RAMP1 (AMYR1) receptor complex. The sequence is that of Calcitonin gene-related peptide 1 (CALCA) from Ovis aries (Sheep).